The primary structure comprises 267 residues: uncharacterized protein (267 aa).

The segment at 72-267 is disordered; sequence LTENNNNNNT…EEKKKKKKKK (196 aa). Over residues 122–145 the composition is skewed to low complexity; that stretch reads DSVSSSTTTTIITNNKKINNNNNN. Residues 159 to 175 are compositionally biased toward basic and acidic residues; sequence ENEKSVQKSKKEKESPK. Low complexity predominate over residues 194–218; that stretch reads SESSSSSSSSSSSESSSSESESSSS.

This is an uncharacterized protein from Dictyostelium discoideum (Social amoeba).